A 288-amino-acid polypeptide reads, in one-letter code: Fructokinase (288 aa).

Residue Thr131 coordinates ATP. Zn(2+) contacts are provided by His154, Cys169, His172, and Cys175. ATP is bound by residues Pro183 and 231–235 (GVMNQ).

The protein belongs to the ROK (NagC/XylR) family. It depends on Mg(2+) as a cofactor.

It carries out the reaction D-fructose + ATP = D-fructose 6-phosphate + ADP + H(+). Its activity is regulated as follows. Inhibition by zinc ions. In Pediococcus pentosaceus, this protein is Fructokinase (scrK).